Reading from the N-terminus, the 504-residue chain is uncharacterized protein (504 aa).

Residues 1 to 212 constitute a propeptide that is removed on maturation; that stretch reads MFMKSKAAGS…LYKTQDPVLD (212 aa).

This is an uncharacterized protein from Deinococcus radiodurans (strain ATCC 13939 / DSM 20539 / JCM 16871 / CCUG 27074 / LMG 4051 / NBRC 15346 / NCIMB 9279 / VKM B-1422 / R1).